The chain runs to 367 residues: DNA replication and repair protein RecF (367 aa).

Residue 30 to 37 (GNNGEGKT) coordinates ATP.

This sequence belongs to the RecF family.

The protein localises to the cytoplasm. The RecF protein is involved in DNA metabolism; it is required for DNA replication and normal SOS inducibility. RecF binds preferentially to single-stranded, linear DNA. It also seems to bind ATP. The protein is DNA replication and repair protein RecF of Leptospira biflexa serovar Patoc (strain Patoc 1 / Ames).